Reading from the N-terminus, the 763-residue chain is Exo-1,4-beta-xylosidase bxlB (763 aa).

Positions 1 to 23 (MAVFKSWNLALLSSLFIPALCQS) are cleaved as a signal peptide. Residue asparagine 63 is glycosylated (N-linked (GlcNAc...) asparagine). Residue aspartate 288 is part of the active site. N-linked (GlcNAc...) asparagine glycosylation is found at asparagine 340, asparagine 408, asparagine 419, asparagine 458, asparagine 621, and asparagine 760.

This sequence belongs to the glycosyl hydrolase 3 family.

The protein resides in the secreted. The enzyme catalyses Hydrolysis of (1-&gt;4)-beta-D-xylans, to remove successive D-xylose residues from the non-reducing termini.. It participates in glycan degradation; xylan degradation. In terms of biological role, xylan 1,4-beta-xylosidase involved in the hydrolysis of xylan, a major structural heterogeneous polysaccharide found in plant biomass representing the second most abundant polysaccharide in the biosphere, after cellulose. Active against rye arabinoxylan and xylohexaose, but not paranitrophenyl-beta-xyloside. The sequence is that of Exo-1,4-beta-xylosidase bxlB (bxlB) from Emericella nidulans (strain FGSC A4 / ATCC 38163 / CBS 112.46 / NRRL 194 / M139) (Aspergillus nidulans).